Here is a 507-residue protein sequence, read N- to C-terminus: AMSH-like ubiquitin thioesterase 3 (507 aa).

The stretch at 73-107 (QERLGSRKRLRAVINELESLKPEFNQLVDKLNRVE) forms a coiled coil. Disordered regions lie at residues 133–162 (HKAS…LTSS) and 214–242 (PSNT…LNGD). Composition is skewed to polar residues over residues 146-162 (LPTS…LTSS), 214-224 (PSNTDWGSADN), and 232-242 (PSSSSASLNGD). The 131-residue stretch at 333–463 (LHVPVRIMDD…IFHLSDPSGV (131 aa)) folds into the MPN domain. The Zn(2+) site is built by histidine 411, histidine 413, aspartate 424, histidine 426, cysteine 469, histidine 475, and histidine 477. Residues 411–424 (HTHPTQTCFMSSVD) carry the JAMM motif motif.

The protein belongs to the peptidase M67C family. In terms of assembly, interacts with PATL1 and PATL2. May also bind to HSC70-1, HSC70-3, VHA-A, BGLU23 and EPSIN1. Interacts with BRO1/ALIX. Requires Zn(2+) as cofactor.

Its subcellular location is the membrane. It is found in the cytoplasm. It localises to the vacuole membrane. The protein resides in the late endosome. In terms of biological role, zinc metalloprotease that cleaves 'Lys-48'- and 'Lys-63'-linked polyubiquitin chains, but is not implicated in protein degradation by the 26S proteasome, deneddylation, or desumoylation. Required for intracellular trafficking (e.g. trafficking from the Golgi to the vacuole and the vacuolar trafficking of endocytosed cargo), endocytosis and vacuole biogenesis. This chain is AMSH-like ubiquitin thioesterase 3 (AMSH3), found in Arabidopsis thaliana (Mouse-ear cress).